The chain runs to 335 residues: Dihydroorotate dehydrogenase (quinone) (335 aa).

Residues 58-62 (AGADK) and Thr-82 contribute to the FMN site. Lys-62 serves as a coordination point for substrate. Residue 107-111 (NRNGF) coordinates substrate. 2 residues coordinate FMN: Asn-135 and Asn-168. Asn-168 is a binding site for substrate. The active-site Nucleophile is Ser-171. Asn-173 contacts substrate. Residues Lys-213 and Gly-241 each contribute to the FMN site. Residue 242–243 (NT) coordinates substrate. FMN-binding positions include Gly-264, Gly-293, and 314-315 (YS).

Belongs to the dihydroorotate dehydrogenase family. Type 2 subfamily. As to quaternary structure, monomer. FMN serves as cofactor.

The protein localises to the cell membrane. The enzyme catalyses (S)-dihydroorotate + a quinone = orotate + a quinol. It functions in the pathway pyrimidine metabolism; UMP biosynthesis via de novo pathway; orotate from (S)-dihydroorotate (quinone route): step 1/1. Functionally, catalyzes the conversion of dihydroorotate to orotate with quinone as electron acceptor. This chain is Dihydroorotate dehydrogenase (quinone), found in Actinobacillus pleuropneumoniae serotype 5b (strain L20).